A 294-amino-acid chain; its full sequence is Lipoyl synthase (294 aa).

[4Fe-4S] cluster contacts are provided by C38, C43, C49, C64, C68, C71, and S277. Positions 50–266 (WSRGTATFLL…RSFAEGAGFR (217 aa)) constitute a Radical SAM core domain.

This sequence belongs to the radical SAM superfamily. Lipoyl synthase family. It depends on [4Fe-4S] cluster as a cofactor.

The protein localises to the cytoplasm. It catalyses the reaction [[Fe-S] cluster scaffold protein carrying a second [4Fe-4S](2+) cluster] + N(6)-octanoyl-L-lysyl-[protein] + 2 oxidized [2Fe-2S]-[ferredoxin] + 2 S-adenosyl-L-methionine + 4 H(+) = [[Fe-S] cluster scaffold protein] + N(6)-[(R)-dihydrolipoyl]-L-lysyl-[protein] + 4 Fe(3+) + 2 hydrogen sulfide + 2 5'-deoxyadenosine + 2 L-methionine + 2 reduced [2Fe-2S]-[ferredoxin]. It functions in the pathway protein modification; protein lipoylation via endogenous pathway; protein N(6)-(lipoyl)lysine from octanoyl-[acyl-carrier-protein]: step 2/2. Catalyzes the radical-mediated insertion of two sulfur atoms into the C-6 and C-8 positions of the octanoyl moiety bound to the lipoyl domains of lipoate-dependent enzymes, thereby converting the octanoylated domains into lipoylated derivatives. This Pelodictyon phaeoclathratiforme (strain DSM 5477 / BU-1) protein is Lipoyl synthase.